We begin with the raw amino-acid sequence, 99 residues long: Integration host factor subunit alpha (99 aa).

Belongs to the bacterial histone-like protein family. As to quaternary structure, heterodimer of an alpha and a beta chain.

In terms of biological role, this protein is one of the two subunits of integration host factor, a specific DNA-binding protein that functions in genetic recombination as well as in transcriptional and translational control. This chain is Integration host factor subunit alpha (ihfA), found in Mannheimia haemolytica (Pasteurella haemolytica).